A 295-amino-acid polypeptide reads, in one-letter code: Cytidine deaminase (295 aa).

CMP/dCMP-type deaminase domains lie at 48-168 and 187-295; these read TDNQ…FGPS and EDDD…YLSL. 89 to 91 provides a ligand contact to substrate; sequence NME. His-102 is a binding site for Zn(2+). Glu-104 (proton donor) is an active-site residue. 2 residues coordinate Zn(2+): Cys-129 and Cys-132.

The protein belongs to the cytidine and deoxycytidylate deaminase family. In terms of assembly, homodimer. Requires Zn(2+) as cofactor.

The catalysed reaction is cytidine + H2O + H(+) = uridine + NH4(+). The enzyme catalyses 2'-deoxycytidine + H2O + H(+) = 2'-deoxyuridine + NH4(+). This enzyme scavenges exogenous and endogenous cytidine and 2'-deoxycytidine for UMP synthesis. The polypeptide is Cytidine deaminase (Vibrio vulnificus (strain CMCP6)).